Reading from the N-terminus, the 1480-residue chain is Nonribosomal peptide synthetase-like enzyme fsqF (1480 aa).

The segment at serine 31 to arginine 59 is disordered. The segment at aspartate 132–tyrosine 527 is adenylation domain. A Carrier domain is found at serine 662–serine 741. An O-(pantetheine 4'-phosphoryl)serine modification is found at serine 700. Residues alanine 739–threonine 754 show a composition bias toward polar residues. Residues alanine 739 to arginine 773 form a disordered region. Residues leucine 780 to glycine 1003 are NAD-binding domain. The aminotransferase domain stretch occupies residues asparagine 1100 to phenylalanine 1465.

The protein belongs to the NRP synthetase family.

It participates in secondary metabolite biosynthesis. Functionally, nonribosomal peptide synthetase-like enzyme; part of the gene cluster that mediates the biosynthesis of the isoquinoline alkaloids fumisoquin A, fumisoquin B and fumisoquin C; as well as small amounts of fumipyrrole as a shunt metabolite. The products of the cluster lead to a brown coloration and are important for growth and conidiation. The nonribosomal peptide synthetase-like protein fsqF, which lacks a canonical condensation domain, is required for addition of a serine-derived dehydroalanine moiety to activated tyrosine but is not essential for the subsequent steps leading to isoquinoline formation. A different enzyme, most likely the ATP-grasp enzyme fsqD, is responsible for activation of tyrosine. Three additional enzymes encoded by the fsq cluster, the N-methyltransferase fsqC, the phenol 2-monooxygenase fsqG and the FAD-dependent oxidase fsqB, catalyze the formation of the isoquinoline ring system in the fumisoquins. FsqB converts the fspF thiolation domain-bound (2S,4S,5S)-2-amino-6-(3,4-dihydroxyphenyl)-4-hydroxy-5-(methylamino)hexanoyl into isoquinoline. The cyclization most likely proceeds via a two-step mechanism, beginning with FAD-dependent oxidation of the methyl group to an iminium species followed by electrophilic attack on the deprotonated phenol. The chain is Nonribosomal peptide synthetase-like enzyme fsqF from Aspergillus fumigatus (strain ATCC MYA-4609 / CBS 101355 / FGSC A1100 / Af293) (Neosartorya fumigata).